Reading from the N-terminus, the 636-residue chain is ABC transporter ATP-binding protein RamA (636 aa).

A run of 5 helical transmembrane segments spans residues 45 to 65, 78 to 98, 175 to 195, 269 to 289, and 297 to 317; these read VLVL…PLAL, AGWW…LDSA, LVDV…ALLL, GVLV…RLAA, and LLAV…ASLL. The 278-residue stretch at 45–322 folds into the ABC transmembrane type-1 domain; the sequence is VLVLLCSVAA…AASLLGAIVR (278 aa). The region spanning 354 to 585 is the ABC transporter domain; it reads LRLCGVRVLR…AGYREVFGAG (232 aa). Position 386-393 (386-393) interacts with ATP; sequence GRSGAGKS. Positions 589–606 are enriched in gly residues; that stretch reads GAGAGAGAGADAGAGADA. Residues 589–636 form a disordered region; sequence GAGAGAGAGADAGAGADAGPGPDSGAATAVGGSGPGPVRRPEPEEARP. Positions 607–618 are enriched in low complexity; that stretch reads GPGPDSGAATAV. Positions 627–636 are enriched in basic and acidic residues; that stretch reads RRPEPEEARP.

It belongs to the ABC transporter superfamily.

The protein resides in the cell membrane. Functionally, probably involved in exporting SapB from the cell. Expression of the ram locus (ramA, ramB and ramR) induces rapid aerial mycelium formation in S.lividans. This is ABC transporter ATP-binding protein RamA from Streptomyces coelicolor (strain ATCC BAA-471 / A3(2) / M145).